A 129-amino-acid chain; its full sequence is Iron-sulfur cluster assembly 1 homolog, mitochondrial (129 aa).

A mitochondrion-targeting transit peptide spans 1 to 12 (MSASLVRATVRA). Fe cation is bound by residues cysteine 57, cysteine 121, and cysteine 123.

It belongs to the HesB/IscA family. Interacts with CRY2, but not with CRY1 (in vitro).

It localises to the mitochondrion. Its function is as follows. Involved in the maturation of mitochondrial 4Fe-4S proteins functioning late in the iron-sulfur cluster assembly pathway. Probably involved in the binding of an intermediate of Fe/S cluster assembly. This chain is Iron-sulfur cluster assembly 1 homolog, mitochondrial (ISCA1), found in Bos taurus (Bovine).